A 1153-amino-acid chain; its full sequence is Nitric oxide synthase, inducible (1153 aa).

The DINNN-motif; mediates interaction with SPSB1, SPSB2 and SPSB4 motif lies at 23 to 27 (DINNN). Residues Cys-110 and Cys-115 each coordinate Zn(2+). Residue Ser-118 participates in (6R)-L-erythro-5,6,7,8-tetrahydrobiopterin binding. Residue Cys-200 coordinates heme b. A Phosphoserine; by PKA modification is found at Ser-234. L-arginine contacts are provided by Gln-263, Trp-372, Tyr-373, and Glu-377. (6R)-L-erythro-5,6,7,8-tetrahydrobiopterin-binding residues include Arg-381, Ile-462, Trp-463, and Phe-476. Tyr-491 provides a ligand contact to heme b. Residues 515–535 (LKVLVKAVLFACMLMRKTMAS) are calmodulin-binding. A Flavodoxin-like domain is found at 539–677 (VTILFATETG…AFRSWAVQTF (139 aa)). FMN-binding residues include Thr-545, Glu-546, Thr-547, Lys-549, and Ser-550. The residue at position 575 (Tyr-575) is a Phosphotyrosine. At Ser-578 the chain carries Phosphoserine; by PKA. The FMN site is built by Ser-591, Thr-592, Ser-628, Arg-633, Cys-635, Glu-661, and Gln-665. The region spanning 730–970 (KNVFTMRLKS…VRNASGFHLP (241 aa)) is the FAD-binding FR-type domain. Position 750 (Arg-750) interacts with NADP(+). His-772 provides a ligand contact to FAD. Phosphoserine; by PKA is present on Ser-892. Residues Arg-906, Tyr-908, Ser-909, Thr-924, and Ala-926 each contribute to the FAD site. Residue Thr-929 coordinates NADP(+). Tyr-930, Val-943, Cys-944, and Ser-945 together coordinate FAD. 8 residues coordinate NADP(+): Thr-984, Arg-1017, Ser-1046, Arg-1047, Lys-1053, Tyr-1055, Gln-1057, and Asp-1090.

Belongs to the NOS family. Homodimer. Interacts with NHERF1. Interacts with GAPDH; induced by oxidatively-modified low-densitity lipoprotein (LDL(ox)). Interacts with S100A8 and S100A9 to form the iNOS-S100A8/9 transnitrosylase complex. Interacts with SPSB1, SPSB2 and SPSB4. Interacts with ELOC and CUL5 in the presence of SPSB1 or SPSB2 or SPSB4. Forms a complex with ASL, ASS1 and HSP90AA1; the complex regulates cell-autonomous L-arginine synthesis and citrulline recycling while channeling extracellular L-arginine to nitric oxide synthesis pathway. Heme b is required as a cofactor. The cofactor is FAD. Requires FMN as cofactor. (6R)-L-erythro-5,6,7,8-tetrahydrobiopterin serves as cofactor. Polyubiquitinated; mediated by SPSB1, SPSB2 and SPSB4, leading to proteasomal degradation. As to expression, expressed in the liver, retina, bone cells and airway epithelial cells of the lung. Not expressed in the platelets. Expressed in chondrocytes.

It is found in the cytoplasm. It localises to the cytosol. The enzyme catalyses 2 L-arginine + 3 NADPH + 4 O2 + H(+) = 2 L-citrulline + 2 nitric oxide + 3 NADP(+) + 4 H2O. Its activity is regulated as follows. Regulated by calcium/calmodulin. Aspirin inhibits expression and function of this enzyme and effects may be exerted at the level of translational/post-translational modification and directly on the catalytic activity. In terms of biological role, produces nitric oxide (NO) which is a messenger molecule with diverse functions throughout the body. In macrophages, NO mediates tumoricidal and bactericidal actions. Also has nitrosylase activity and mediates cysteine S-nitrosylation of cytoplasmic target proteins such PTGS2/COX2. As component of the iNOS-S100A8/9 transnitrosylase complex involved in the selective inflammatory stimulus-dependent S-nitrosylation of GAPDH on 'Cys-247' implicated in regulation of the GAIT complex activity and probably multiple targets including ANXA5, EZR, MSN and VIM. Involved in inflammation, enhances the synthesis of pro-inflammatory mediators such as IL6 and IL8. The protein is Nitric oxide synthase, inducible of Homo sapiens (Human).